The sequence spans 273 residues: Dermonecrotic toxin LapSicTox-alphaIB1aiii (273 aa).

The active site involves His5. Mg(2+)-binding residues include Glu25 and Asp27. His41 functions as the Nucleophile in the catalytic mechanism. Cystine bridges form between Cys45/Cys51 and Cys47/Cys190. Mg(2+) is bound at residue Asp85. A glycan (N-linked (GlcNAc...) asparagine) is linked at Asn250.

The protein belongs to the arthropod phospholipase D family. Class II subfamily. Requires Mg(2+) as cofactor. As to expression, expressed by the venom gland.

Its subcellular location is the secreted. The catalysed reaction is an N-(acyl)-sphingosylphosphocholine = an N-(acyl)-sphingosyl-1,3-cyclic phosphate + choline. The enzyme catalyses an N-(acyl)-sphingosylphosphoethanolamine = an N-(acyl)-sphingosyl-1,3-cyclic phosphate + ethanolamine. It carries out the reaction a 1-acyl-sn-glycero-3-phosphocholine = a 1-acyl-sn-glycero-2,3-cyclic phosphate + choline. It catalyses the reaction a 1-acyl-sn-glycero-3-phosphoethanolamine = a 1-acyl-sn-glycero-2,3-cyclic phosphate + ethanolamine. Functionally, dermonecrotic toxins cleave the phosphodiester linkage between the phosphate and headgroup of certain phospholipids (sphingolipid and lysolipid substrates), forming an alcohol (often choline) and a cyclic phosphate. This toxin acts on sphingomyelin (SM). It may also act on ceramide phosphoethanolamine (CPE), lysophosphatidylcholine (LPC) and lysophosphatidylethanolamine (LPE), but not on lysophosphatidylserine (LPS), and lysophosphatidylglycerol (LPG). It acts by transphosphatidylation, releasing exclusively cyclic phosphate products as second products. Induces dermonecrosis, hemolysis, increased vascular permeability, edema, inflammatory response, and platelet aggregation. The chain is Dermonecrotic toxin LapSicTox-alphaIB1aiii from Loxosceles apachea (Apache recluse spider).